The primary structure comprises 217 residues: Small ribosomal subunit protein uS2 (217 aa).

The protein belongs to the universal ribosomal protein uS2 family.

The sequence is that of Small ribosomal subunit protein uS2 from Korarchaeum cryptofilum (strain OPF8).